A 276-amino-acid polypeptide reads, in one-letter code: NAD kinase (276 aa).

Asp67 acts as the Proton acceptor in catalysis. Residues 67 to 68 (DG), Arg72, 136 to 137 (ND), Lys147, Arg164, Asp166, 177 to 182 (TAYALS), Ala201, and Gln235 contribute to the NAD(+) site.

This sequence belongs to the NAD kinase family. A divalent metal cation serves as cofactor.

It is found in the cytoplasm. The enzyme catalyses NAD(+) + ATP = ADP + NADP(+) + H(+). Functionally, involved in the regulation of the intracellular balance of NAD and NADP, and is a key enzyme in the biosynthesis of NADP. Catalyzes specifically the phosphorylation on 2'-hydroxyl of the adenosine moiety of NAD to yield NADP. This chain is NAD kinase, found in Thermococcus sibiricus (strain DSM 12597 / MM 739).